Consider the following 1228-residue polypeptide: Serine/threonine-protein kinase CST20 (1228 aa).

The segment covering 1–18 (MSILSENNPTQTSITDPN) has biased composition (polar residues). Disordered stretches follow at residues 1-382 (MSIL…TAHN) and 405-468 (NSTN…HSQE). Low complexity-rich tracts occupy residues 57 to 70 (NTTSANTSSLSLGS) and 95 to 123 (ESGSSDIDDSQQSHNNNNNNNNNESNPES). Residues 148 to 159 (HQGDDSDNEKQY) show a composition bias toward basic and acidic residues. Composition is skewed to polar residues over residues 173–195 (DSYSPGTLESPGTLNALETNNVS), 205–222 (TSSLEDLSLSLQHQNENA), and 232–244 (PQVSTSKTSSFHD). Residues 246-255 (SSVISSSTSV) show a composition bias toward low complexity. 2 stretches are compositionally biased toward polar residues: residues 260–275 (SNPTSTRGSHLSSYKS) and 309–328 (DTLSSATNSPNLLRNDTLQG). Residues 347–367 (NTSATSRNTSGTSTSTVVKNS) show a composition bias toward low complexity. The segment covering 368 to 382 (RSGTSKLTSTSTAHN) has biased composition (polar residues). The span at 437–466 (KVRGVFSSMFGKNKSTSSSSSSNSGSNSHS) shows a compositional bias: low complexity. Residues 473–486 (ISTPFNAKHLAHVG) enclose the CRIB domain. Disordered stretches follow at residues 543-829 (FHFD…ALAD) and 865-917 (LREK…KQAA). Residues 548-559 (NKSSSSGWSNEN) show a composition bias toward polar residues. Positions 568-579 (SNSGSGGGGGGA) are enriched in gly residues. Residues 602-611 (ITPSQSMPTK) show a composition bias toward polar residues. A compositionally biased stretch (basic and acidic residues) spans 612–626 (TESKQSENQHPHEDN). The span at 627 to 640 (ATQYTPRTPTSHVQ) shows a compositional bias: polar residues. Composition is skewed to low complexity over residues 668–681 (PSSQSLPRSDSQSD), 693–708 (ISPSKIKIRSISSKSL), and 734–747 (SIPKSKSHSASLSS). The span at 748–759 (QLRPATNGSTTA) shows a compositional bias: polar residues. Pro residues predominate over residues 787 to 805 (APPPPPSASPAPPVPPAPP). Residues 809–824 (LSEQTSEIPQQRTAPS) are compositionally biased toward polar residues. A compositionally biased stretch (basic and acidic residues) spans 865–874 (LREKNERQNR). Residues 875-890 (QQETGQNNADTASGGS) are compositionally biased toward polar residues. The Protein kinase domain occupies 951-1203 (YVDLVKIGQG…ADELLHDNFI (253 aa)). ATP-binding positions include 957-965 (IGQGASGGV) and K981. D1071 serves as the catalytic Proton acceptor.

This sequence belongs to the protein kinase superfamily. STE Ser/Thr protein kinase family. STE20 subfamily.

The protein localises to the cytoplasm. It is found in the nucleus. The catalysed reaction is L-seryl-[protein] + ATP = O-phospho-L-seryl-[protein] + ADP + H(+). It catalyses the reaction L-threonyl-[protein] + ATP = O-phospho-L-threonyl-[protein] + ADP + H(+). Functionally, MAP4K component of the MAPK pathway required for the mating pheromone response, and the regulation of cell polarity and cell cycle. Phosphorylates histone H2B to form H2BS10ph. Required for hyphal formation and virulence. In Candida albicans (strain SC5314 / ATCC MYA-2876) (Yeast), this protein is Serine/threonine-protein kinase CST20 (CST20).